Reading from the N-terminus, the 295-residue chain is MMQITEKYLPFGNWQTYCRIVGEATDRAPLLLLHGGPGSSHNYFEVLDQVAEKSGRQVIMYDQLGCGNSSIPDDQAETAYTAQTWVKELENVREQLGLDQIHLLGQSWGGMLALIYLCDYQPEGVKSLILSSTLASAKLWSQELHRLIKYLPKGEQAAIKEAETTGNYDSLAYQAANAHFMDQHAIKLTPDLPEPVLRKKKGGSLAYLTGWGPNEYTPIGNLHGYEYTDRLKDLHLPALITSGTDDLCTPLVAKSMYDNLPNARWELFAGCGHMPFVQENAKYQELLSDWLISQD.

The AB hydrolase-1 domain occupies 29 to 279; sequence PLLLLHGGPG…GCGHMPFVQE (251 aa). Ser-107 acts as the Nucleophile in catalysis. Asp-246 is a catalytic residue. The Proton donor role is filled by His-273.

This sequence belongs to the peptidase S33 family.

Its subcellular location is the cell envelope. It carries out the reaction Release of N-terminal proline from a peptide.. Functionally, releases the N-terminal proline from various substrates. The polypeptide is Proline iminopeptidase (Lactobacillus delbrueckii subsp. bulgaricus (strain ATCC 11842 / DSM 20081 / BCRC 10696 / JCM 1002 / NBRC 13953 / NCIMB 11778 / NCTC 12712 / WDCM 00102 / Lb 14)).